The primary structure comprises 449 residues: Required for meiotic nuclear division protein 1 homolog (449 aa).

Residues 1–16 (MPATLLRAVAGSHRVL) constitute a mitochondrion transit peptide.

It belongs to the RMD1/sif2 family. As to quaternary structure, homooligomer.

The protein localises to the mitochondrion. Functionally, required for mitochondrial translation, possibly by coordinating the assembly or maintenance of the mitochondrial ribosome. This is Required for meiotic nuclear division protein 1 homolog (RMND1) from Pongo abelii (Sumatran orangutan).